We begin with the raw amino-acid sequence, 922 residues long: Pertactin autotransporter (922 aa).

A signal peptide spans 1–34 (MNMSLSRIVKAAPLRRTTLAMALGALGAAPAAYA). The Cell attachment site; involved in adhesion to various eukaryotic cell lines motif lies at 260–262 (RGD). 3 tandem repeats follow at residues 266-270 (GGAVP), 271-275 (GGAVP), and 276-280 (GGAVP). Residues 266-290 (GGAVPGGAVPGGAVPGGFGPLLDGW) form a 4 X 5 AA tandem repeats of G-G-A-V-P region. Residues 281 to 285 (GGFGP) form a 4; approximate repeat. The segment at 561-619 (SLVGAKAPPAPKPAPQPGPQPGPQPPQPPQPPQPPQPPQPPQRQPEAPAPQPPAGRELS) is disordered. Pro residues predominate over residues 568-613 (PPAPKPAPQPGPQPGPQPPQPPQPPQPPQPPQPPQRQPEAPAPQPP). Residues 575-603 (PQPGPQPGPQPPQPPQPPQPPQPPQPPQR) are 9 X 3 AA approximate repeats of P-Q-P. The region spanning 654–922 (LNPDAGGAWG…TFHAGYRYSW (269 aa)) is the Autotransporter domain.

In terms of assembly, monomer.

The protein localises to the periplasm. It localises to the secreted. Its subcellular location is the cell surface. It is found in the cell outer membrane. Its function is as follows. Agglutinogen that binds to eukaryotic cells; a process mediated by the R-G-D sequence. Pertactin may have a role in bacterial adhesion, and thus play a role in virulence. May contribute to the disease state of whooping cough. The sequence is that of Pertactin autotransporter (prn) from Bordetella parapertussis (strain 12822 / ATCC BAA-587 / NCTC 13253).